The primary structure comprises 449 residues: MSFTPGKQSSSRASSGNRSGNGILKWADQSDQSRNVQTRGRRVQSKQTATSQQPSGGTVVPYYSWFSGITQFQKGKEFEFAEGQGVPIAPGVPSTEAKGYWYRHNRRSFKTADGNQRQLLPRWYFYYLGTGPHAKDQYGTDIDGVFWVASNQADINTPADIVDRDPSSDEAIPTRFPPGTVLPQGYYIEGSGRSAPNSRSTSRAPNRAPSAGSRSRANSGNRTSTPGVTPDMADQIASLVLAKLGKDATKPQQVTKQTAKEVRQKILNKPRQKRSPNKQCTVQQCFGKRGPNQNFGGGEMLKLGTSDPQFPILAELAPTAGAFFFGSRLELAKVQNLSGNPDEPQKDVYELRYNGAIRFDSTLSGFETIMKVLNQNLNAYQHQEDGMMNISPKPQRQRGQKNGQVENDNVSVAAPKSRVQQNKSRELTAEDISLLKKMDEPYTEDTSEI.

The interval 1–55 (MSFTPGKQSSSRASSGNRSGNGILKWADQSDQSRNVQTRGRRVQSKQTATSQQPS) is disordered. Residues 9–22 (SSSRASSGNRSGNG) show a composition bias toward low complexity. 2 stretches are compositionally biased toward polar residues: residues 29-38 (QSDQSRNVQT) and 45-55 (SKQTATSQQPS). The tract at residues 52–194 (QQPSGGTVVP…GYYIEGSGRS (143 aa)) is RNA-binding. A CoV N NTD domain is found at 61–190 (PYYSWFSGIT…VLPQGYYIEG (130 aa)). R106, R122, and R164 together coordinate RNA. 3 disordered regions span residues 158 to 231 (PADI…VTPD), 266 to 297 (ILNK…NFGG), and 387 to 449 (MMNI…TSEI). S167 bears the Phosphoserine; by host mark. A Phosphothreonine; by host modification is found at T174. Phosphoserine; by host is present on S191. Composition is skewed to polar residues over residues 194 to 204 (SAPNSRSTSRA) and 212 to 227 (GSRS…STPG). The CoV N CTD domain occupies 259–384 (AKEVRQKILN…QNLNAYQHQE (126 aa)). Basic residues predominate over residues 266-276 (ILNKPRQKRSP). The interval 266 to 385 (ILNKPRQKRS…NLNAYQHQED (120 aa)) is dimerization. S391 carries the post-translational modification Phosphoserine; by host. Residues 400–410 (QKNGQVENDNV) show a composition bias toward polar residues. Residues 423–440 (KSRELTAEDISLLKKMDE) are compositionally biased toward basic and acidic residues. S424 is modified (phosphoserine; by host). A Phosphothreonine; by host modification is found at T428.

It belongs to the betacoronavirus nucleocapsid protein family. As to quaternary structure, homooligomer. Both monomeric and oligomeric forms interact with RNA. Interacts with protein M. Interacts with NSP3; this interaction serves to tether the genome to the newly translated replicase-transcriptase complex at a very early stage of infection. ADP-ribosylated. The ADP-ribosylation is retained in the virion during infection. Post-translationally, phosphorylated on serine and threonine residues.

The protein resides in the virion. It localises to the host endoplasmic reticulum-Golgi intermediate compartment. Its subcellular location is the host Golgi apparatus. Its function is as follows. Packages the positive strand viral genome RNA into a helical ribonucleocapsid (RNP) and plays a fundamental role during virion assembly through its interactions with the viral genome and membrane protein M. Plays an important role in enhancing the efficiency of subgenomic viral RNA transcription as well as viral replication. This is Nucleoprotein from Sus scrofa (Pig).